The sequence spans 215 residues: FMN-dependent NADH:quinone oxidoreductase (215 aa).

17–19 (SAS) is an FMN binding site.

It belongs to the azoreductase type 1 family. Homodimer. It depends on FMN as a cofactor.

The enzyme catalyses 2 a quinone + NADH + H(+) = 2 a 1,4-benzosemiquinone + NAD(+). It catalyses the reaction N,N-dimethyl-1,4-phenylenediamine + anthranilate + 2 NAD(+) = 2-(4-dimethylaminophenyl)diazenylbenzoate + 2 NADH + 2 H(+). Quinone reductase that provides resistance to thiol-specific stress caused by electrophilic quinones. Functionally, also exhibits azoreductase activity. Catalyzes the reductive cleavage of the azo bond in aromatic azo compounds to the corresponding amines. This is FMN-dependent NADH:quinone oxidoreductase from Clostridium botulinum (strain Eklund 17B / Type B).